Reading from the N-terminus, the 919-residue chain is Glutamate receptor ionotropic, kainate 3 (919 aa).

A signal peptide spans 1–31; sequence MTAPWRRLRSLVWEYWAGLLVCAFWIPDSRG. Over 32–563 the chain is Extracellular; it reads MPHVIRIGGI…VFSFLNPLSP (532 aa). N-linked (GlcNAc...) asparagine glycans are attached at residues Asn70, Asn76, Asn278, Asn381, Asn415, Asn426, and Asn433. Residues Cys99 and Cys350 are joined by a disulfide bond. Positions 518, 520, and 525 each coordinate L-glutamate. N-linked (GlcNAc...) asparagine glycans are attached at residues Asn548 and Asn551. A helical membrane pass occupies residues 564 to 584; sequence DIWMYVLLAYLGVSCVLFVIA. Topologically, residues 585–636 are cytoplasmic; that stretch reads RFSPYEWYDAHPCNPGSEVVENNFTLLNSFWFGMGSLMQQGSELMPKALSTR. Residues 637–657 traverse the membrane as a helical segment; that stretch reads IIGGIWWFFTLIIISSYTANL. Residues 658-820 are Extracellular-facing; sequence AAFLTVERME…KEASALGIQK (163 aa). 3 residues coordinate L-glutamate: Ala691, Thr692, and Glu739. The N-linked (GlcNAc...) asparagine glycan is linked to Asn752. A helical membrane pass occupies residues 821–841; it reads IGGIFIVLAAGLVLSVLVAVG. The Cytoplasmic segment spans residues 842 to 919; the sequence is EFVYKLRKTA…CSTSLAPVFP (78 aa). The residue at position 869 (Ser869) is a Phosphoserine. A Glycyl lysine isopeptide (Lys-Gly) (interchain with G-Cter in SUMO1) cross-link involves residue Lys887.

It belongs to the glutamate-gated ion channel (TC 1.A.10.1) family. GRIK3 subfamily. Homotetramer, and heterotetramer with either GRIK4 or GRIK5. Can form functional heteromeric receptors with GRIK2. Interacts with PRKCABP. Interacts with NETO2.

It is found in the cell membrane. The protein resides in the postsynaptic cell membrane. The enzyme catalyses Ca(2+)(in) = Ca(2+)(out). Its function is as follows. Ionotropic glutamate receptor that functions as a cation-permeable ligand-gated ion channel, gated by L-glutamate and the glutamatergic agonist kainic acid. Binding of the excitatory neurotransmitter L-glutamate induces a conformation change, leading to the opening of the cation channel, and thereby converts the chemical signal to an electrical impulse. The receptor then desensitizes rapidly and enters a transient inactive state, characterized by the presence of bound agonist. In association with GRIK2, involved in presynaptic facilitation of glutamate release at hippocampal mossy fiber synapses. This chain is Glutamate receptor ionotropic, kainate 3 (GRIK3), found in Macaca fascicularis (Crab-eating macaque).